The primary structure comprises 116 residues: uncharacterized protein (116 aa).

Positions 97-116 (AKGKGNEGREEAEEASGKSK) are disordered. A compositionally biased stretch (basic and acidic residues) spans 100-116 (KGNEGREEAEEASGKSK).

It belongs to the UPF0440 family.

This is an uncharacterized protein from Pyrococcus horikoshii (strain ATCC 700860 / DSM 12428 / JCM 9974 / NBRC 100139 / OT-3).